The chain runs to 494 residues: UPF0371 protein SSA_0208 (494 aa).

Belongs to the UPF0371 family.

The polypeptide is UPF0371 protein SSA_0208 (Streptococcus sanguinis (strain SK36)).